We begin with the raw amino-acid sequence, 261 residues long: Histone H1-I (261 aa).

The segment covering 1–22 (MSETEAAPVVAPAAEAAPAAEA) has biased composition (low complexity). Disordered stretches follow at residues 1 to 63 (MSET…PPYI) and 125 to 261 (FKLS…KGKK). Over residues 41-50 (APKEPKAPKE) the composition is skewed to basic and acidic residues. Residues 58–129 (THPPYIEMVK…KVKGSFKLSE (72 aa)) enclose the H15 domain. Residues 133 to 142 (AKAKKSTPKK) show a composition bias toward basic residues. Tandem repeats lie at residues 136 to 140 (KKSTP) and 188 to 192 (KKATP). Residues 136-250 (KKSTPKKAKA…KKAPAKKSTP (115 aa)) are 7 X 5 AA repeats of K-K-[AS]-T-P. A DNA-binding region spans residues 139–142 (TPKK). A compositionally biased stretch (basic and acidic residues) spans 143–198 (AKADGEAKPKKSEAKPKKAEAVKKTKAPKEKVERPKKEKKEKVEKKKATPKAEKPK). One copy of the 3; approximate repeat lies at 199-203 (KAATP). A run of 4 repeats spans residues 209 to 213 (KKATP), 230 to 234 (KKATP), 236 to 240 (KKAAP), and 246 to 250 (KKSTP). The span at 227-250 (AKPKKATPSKKAAPKKAPAKKSTP) shows a compositional bias: basic residues. Basic and acidic residues predominate over residues 251–261 (KAKEAKSKGKK).

The protein belongs to the histone H1/H5 family.

It is found in the nucleus. It localises to the chromosome. Histones H1 are necessary for the condensation of nucleosome chains into higher-order structures. This Volvox carteri (Green alga) protein is Histone H1-I (H1-I).